Here is a 131-residue protein sequence, read N- to C-terminus: UPF0102 protein YraN (131 aa).

Belongs to the UPF0102 family.

In Salmonella typhi, this protein is UPF0102 protein YraN.